The sequence spans 354 residues: Sulfate permease CysP (354 aa).

8 helical membrane passes run 3–23, 40–60, 77–97, 125–145, 164–184, 197–217, 293–313, and 320–340; these read LAAILFSLFFAMNIGASGAAA, ALILCAVGVFAGAVIGGGEVV, IVCIIIGAAALSLFTANLLGI, LIIVSFWVFVPLFAFGFTYFV, ILGIVLLVAGFFEAFSAGMNN, VLDVGKGTLYGGAFVALGALL, VWIVSPFLSLSISYLLVSLFL, and IFIMVSVLLAAGGAISLTKAI.

This sequence belongs to the inorganic phosphate transporter (PiT) (TC 2.A.20) family.

The protein localises to the cell membrane. In terms of biological role, involved in the import of sulfate. This Bacillus subtilis (strain 168) protein is Sulfate permease CysP (cysP).